The primary structure comprises 134 residues: Profilin-2 (134 aa).

A disulfide bridge links C13 with C118. The short motif at 84-100 is the Involved in PIP2 interaction element; that stretch reads AVIRGKKGSGGITIKKT. T114 carries the phosphothreonine modification.

Belongs to the profilin family. As to quaternary structure, occurs in many kinds of cells as a complex with monomeric actin in a 1:1 ratio. Phosphorylated by MAP kinases.

The protein localises to the cytoplasm. The protein resides in the cytoskeleton. Binds to actin and affects the structure of the cytoskeleton. At high concentrations, profilin prevents the polymerization of actin, whereas it enhances it at low concentrations. The protein is Profilin-2 of Olea europaea (Common olive).